The following is a 37-amino-acid chain: MKIRASARKICEKCRLIRRRGRILVICSNPRHKQRQG.

Belongs to the bacterial ribosomal protein bL36 family.

It is found in the plastid. The protein localises to the chloroplast. The chain is Large ribosomal subunit protein bL36c from Piper cenocladum (Ant piper).